The primary structure comprises 149 residues: Squidulin (149 aa).

Ala1 is modified (N-acetylalanine). 4 EF-hand domains span residues Lys7–Thr42, Pro43–Pro78, Asp80–Glu115, and Leu117–Lys149. Asp20, Asp22, Asp24, Gln26, Glu31, Asp56, Asp58, Asn60, Thr62, Glu67, Asp93, Asp95, Asn97, Glu104, Asp130, Asp132, Asp134, Met136, and Glu141 together coordinate Ca(2+).

Belongs to the calmodulin family.

Functionally, not known. This protein has four functional calcium-binding sites. The chain is Squidulin from Doryteuthis pealeii (Longfin inshore squid).